Here is a 33-residue protein sequence, read N- to C-terminus: Photosystem II reaction center protein Psb30 (33 aa).

The helical transmembrane segment at 5-25 threads the bilayer; sequence VIAQPIVLGLIVASGPLVIVS.

It belongs to the Psb30/Ycf12 family. PSII is composed of 1 copy each of membrane proteins PsbA, PsbB, PsbC, PsbD, PsbE, PsbF, PsbH, PsbI, PsbJ, PsbK, PsbL, PsbM, PsbT, PsbX, PsbY, PsbZ, Psb30/Ycf12, peripheral proteins of the oxygen-evolving complex and a large number of cofactors. It forms dimeric complexes.

It localises to the plastid membrane. In terms of biological role, a core subunit of photosystem II (PSII), probably helps stabilize the reaction center. The chain is Photosystem II reaction center protein Psb30 from Aneura mirabilis (Parasitic liverwort).